The chain runs to 172 residues: Urease accessory protein UreE (172 aa).

This sequence belongs to the UreE family.

The protein resides in the cytoplasm. Involved in urease metallocenter assembly. Binds nickel. Probably functions as a nickel donor during metallocenter assembly. This Shewanella halifaxensis (strain HAW-EB4) protein is Urease accessory protein UreE.